The sequence spans 43 residues: Protein PsbN (43 aa).

The chain crosses the membrane as a helical span at residues 7 to 27 (LVVAIAAITICITAFAIYTAF).

It belongs to the PsbN family.

The protein resides in the cellular thylakoid membrane. May play a role in photosystem I and II biogenesis. The chain is Protein PsbN from Synechococcus sp. (strain JA-3-3Ab) (Cyanobacteria bacterium Yellowstone A-Prime).